We begin with the raw amino-acid sequence, 828 residues long: Periplasmic nitrate reductase (828 aa).

Positions 1 to 31 form a signal peptide, tat-type signal; it reads MKLSRRSFMKANAVAAAAAAAGLSVPGVARA. The 4Fe-4S Mo/W bis-MGD-type domain maps to 39-95; that stretch reads IKWDKAPCRFCGTGCGVLVGTQQGRVVACQGDPDAPVNRGLNCIKGYFLPKIMYGKD. [4Fe-4S] cluster is bound by residues Cys-46, Cys-49, Cys-53, and Cys-81. Mo-bis(molybdopterin guanine dinucleotide) contacts are provided by residues Lys-83, Gln-150, Asn-175, Cys-179, 212–219, 243–247, 262–264, Met-372, Gln-376, Asn-482, 508–509, Lys-531, Asp-558, and 718–727; these read WGANMAEM, STYQH, QSD, SD, and TGRVLEHWHT. Phe-794 lines the substrate pocket. Mo-bis(molybdopterin guanine dinucleotide)-binding residues include Asn-802 and Lys-819.

This sequence belongs to the prokaryotic molybdopterin-containing oxidoreductase family. NasA/NapA/NarB subfamily. Component of the periplasmic nitrate reductase NapAB complex composed of NapA and NapB. Requires [4Fe-4S] cluster as cofactor. Mo-bis(molybdopterin guanine dinucleotide) serves as cofactor. In terms of processing, predicted to be exported by the Tat system. The position of the signal peptide cleavage has not been experimentally proven.

The protein localises to the periplasm. The enzyme catalyses 2 Fe(II)-[cytochrome] + nitrate + 2 H(+) = 2 Fe(III)-[cytochrome] + nitrite + H2O. Its function is as follows. Catalytic subunit of the periplasmic nitrate reductase complex NapAB. Receives electrons from NapB and catalyzes the reduction of nitrate to nitrite. This is Periplasmic nitrate reductase from Escherichia coli O9:H4 (strain HS).